A 132-amino-acid chain; its full sequence is DNA-binding protein inhibitor ID-2 (132 aa).

Residues 23 to 75 (ARSKTPVDDPMSLLYNMNDCYSKLKELVPSIPQNKKVSKMEILQHVIDYILDL) enclose the bHLH domain. Positions 105 to 114 (LNTDISILSL) match the Nuclear export signal motif.

As to quaternary structure, heterodimer with other HLH proteins.

The protein localises to the cytoplasm. It localises to the nucleus. In terms of biological role, transcriptional regulator (lacking a basic DNA binding domain) which negatively regulates the basic helix-loop-helix (bHLH) transcription factors by forming heterodimers and inhibiting their DNA binding and transcriptional activity. Inhibits the activity of both neurogenic (neurod1/neuroD) and myogenic (myod1/myoD) bHLH factors. May play a role in the regulation of the circadian clock. The sequence is that of DNA-binding protein inhibitor ID-2 from Xenopus tropicalis (Western clawed frog).